Here is a 423-residue protein sequence, read N- to C-terminus: Imidazolonepropionase (423 aa).

Fe(3+) contacts are provided by His-80 and His-82. Zn(2+) contacts are provided by His-80 and His-82. Positions 89, 152, and 185 each coordinate 4-imidazolone-5-propanoate. Residue Tyr-152 coordinates N-formimidoyl-L-glutamate. Fe(3+) is bound at residue His-250. Position 250 (His-250) interacts with Zn(2+). 4-imidazolone-5-propanoate is bound at residue Gln-253. Residue Asp-325 coordinates Fe(3+). Zn(2+) is bound at residue Asp-325. Asn-327 and Gly-329 together coordinate N-formimidoyl-L-glutamate. Thr-330 serves as a coordination point for 4-imidazolone-5-propanoate.

This sequence belongs to the metallo-dependent hydrolases superfamily. HutI family. It depends on Zn(2+) as a cofactor. Requires Fe(3+) as cofactor.

Its subcellular location is the cytoplasm. The catalysed reaction is 4-imidazolone-5-propanoate + H2O = N-formimidoyl-L-glutamate. The protein operates within amino-acid degradation; L-histidine degradation into L-glutamate; N-formimidoyl-L-glutamate from L-histidine: step 3/3. Functionally, catalyzes the hydrolytic cleavage of the carbon-nitrogen bond in imidazolone-5-propanoate to yield N-formimidoyl-L-glutamate. It is the third step in the universal histidine degradation pathway. This is Imidazolonepropionase from Cupriavidus pinatubonensis (strain JMP 134 / LMG 1197) (Cupriavidus necator (strain JMP 134)).